Reading from the N-terminus, the 516-residue chain is Poly(U)-binding-splicing factor PUF60-B (516 aa).

RRM domains are found at residues 86-164 (CRVY…RPGS) and 183-261 (NRIY…KAVT). Positions 356–398 (TAPASMGTPTSAVQLHTEVKREEDSRRTAEDHSAPVGNGQDSE) are disordered. The segment covering 372–388 (TEVKREEDSRRTAEDHS) has biased composition (basic and acidic residues). Residues 419–506 (TVMVLRNMVG…RKVVAELYDQ (88 aa)) form the RRM 3; atypical domain.

Belongs to the RRM half pint family.

Its subcellular location is the nucleus. In terms of biological role, DNA- and RNA-binding protein, involved in transcription repression and pre-mRNA splicing. The sequence is that of Poly(U)-binding-splicing factor PUF60-B (puf60b) from Danio rerio (Zebrafish).